The chain runs to 244 residues: Glutathione-independent glyoxalase hsp3101 (244 aa).

Catalysis depends on residues cysteine 139, histidine 140, and glutamate 173.

This sequence belongs to the peptidase C56 family. HSP31-like subfamily.

It localises to the cytoplasm. The protein resides in the nucleus. It catalyses the reaction methylglyoxal + H2O = (R)-lactate + H(+). Catalyzes the conversion of methylglyoxal (MG) to D-lactate in a single glutathione (GSH)-independent step. May play a role in detoxifying endogenously produced glyoxals. Involved in protection against reactive oxygen species (ROS). The chain is Glutathione-independent glyoxalase hsp3101 from Schizosaccharomyces pombe (strain 972 / ATCC 24843) (Fission yeast).